The following is a 211-amino-acid chain: Large ribosomal subunit protein eL13 (211 aa).

This sequence belongs to the eukaryotic ribosomal protein eL13 family. Component of the 60S large ribosomal subunit (LSU).

It localises to the cytoplasm. Component of the ribosome, a large ribonucleoprotein complex responsible for the synthesis of proteins in the cell. The small ribosomal subunit (SSU) binds messenger RNAs (mRNAs) and translates the encoded message by selecting cognate aminoacyl-transfer RNA (tRNA) molecules. The large subunit (LSU) contains the ribosomal catalytic site termed the peptidyl transferase center (PTC), which catalyzes the formation of peptide bonds, thereby polymerizing the amino acids delivered by tRNAs into a polypeptide chain. The nascent polypeptides leave the ribosome through a tunnel in the LSU and interact with protein factors that function in enzymatic processing, targeting, and the membrane insertion of nascent chains at the exit of the ribosomal tunnel. As part of the LSU, it is probably required for its formation and the maturation of rRNAs. This chain is Large ribosomal subunit protein eL13 (rpl13), found in Danio rerio (Zebrafish).